The following is a 414-amino-acid chain: Riboflavin biosynthesis protein RibBA (414 aa).

The segment at 1-204 (MTRFDTIERA…IADMIAWRRK (204 aa)) is DHBP synthase. D-ribulose 5-phosphate contacts are provided by residues 28 to 29 (RE), D33, 141 to 145 (RPGHT), and E165. A Mg(2+)-binding site is contributed by E29. Residue H144 participates in Mg(2+) binding. The GTP cyclohydrolase II stretch occupies residues 205–414 (HEKQVVRVAE…DDLDLGETAQ (210 aa)). 255 to 259 (RVHSE) is a binding site for GTP. Residues C260, C271, and C273 each coordinate Zn(2+). GTP contacts are provided by residues Q276, 299–301 (EGR), and T321. The Proton acceptor; for GTP cyclohydrolase activity role is filled by D333. R335 (nucleophile; for GTP cyclohydrolase activity) is an active-site residue. Residues T356 and K361 each coordinate GTP.

This sequence in the N-terminal section; belongs to the DHBP synthase family. The protein in the C-terminal section; belongs to the GTP cyclohydrolase II family. Mg(2+) is required as a cofactor. It depends on Mn(2+) as a cofactor. Requires Zn(2+) as cofactor.

It carries out the reaction D-ribulose 5-phosphate = (2S)-2-hydroxy-3-oxobutyl phosphate + formate + H(+). It catalyses the reaction GTP + 4 H2O = 2,5-diamino-6-hydroxy-4-(5-phosphoribosylamino)-pyrimidine + formate + 2 phosphate + 3 H(+). The protein operates within cofactor biosynthesis; riboflavin biosynthesis; 2-hydroxy-3-oxobutyl phosphate from D-ribulose 5-phosphate: step 1/1. It participates in cofactor biosynthesis; riboflavin biosynthesis; 5-amino-6-(D-ribitylamino)uracil from GTP: step 1/4. Its function is as follows. Catalyzes the conversion of D-ribulose 5-phosphate to formate and 3,4-dihydroxy-2-butanone 4-phosphate. Catalyzes the conversion of GTP to 2,5-diamino-6-ribosylamino-4(3H)-pyrimidinone 5'-phosphate (DARP), formate and pyrophosphate. In Nocardia farcinica (strain IFM 10152), this protein is Riboflavin biosynthesis protein RibBA.